Reading from the N-terminus, the 132-residue chain is Transmembrane protein 170B (132 aa).

Over 1–37 (MRAEGADHSMINLSVQQVLSLWAHGTVLRNLTEMWYW) the chain is Extracellular. N-linked (GlcNAc...) asparagine glycosylation is present at asparagine 12. A helical membrane pass occupies residues 38–58 (IFLWALFSSLFVHGAAGVLMF). Residues 59–68 (VMLQRHRQGR) are Cytoplasmic-facing. A helical membrane pass occupies residues 69-89 (VISIIAVSIGFLASVTGAMIT). At 90–104 (SAAVAGIYRVAGKNM) the chain is on the extracellular side. The chain crosses the membrane as a helical span at residues 105 to 125 (APLEALVWGVGQTVLTLIISF). The Cytoplasmic segment spans residues 126–132 (SRILATL).

Belongs to the TMEM170 family. In terms of assembly, interacts with CTNNB1.

The protein resides in the cell membrane. The chain is Transmembrane protein 170B from Mus musculus (Mouse).